The following is a 375-amino-acid chain: MRSHHRHFSSYVSFILFLFLFFISFSSSTSKLEPAKSEPKRKHSVSAILVFGDSTVDPGNNNYIDTVFKCNFPPYGLDFRNKTPTGRFCNGRLVTDFIASYIGVKENVPPYLDPNLGINELISGVSFASAGSGYDPLTPTITNVIDIPTQLEYFREYKRKLEGKMGKQEMEKHIEEAMFCVSAGTNDFVINYFTIPIRRKTFTIEAYQQFVISNLKQFIQGLWKEGARKITVAGLPPIGCLPIVITLFSGEALTNRRCIDRFSTVATNYNFLLQKQLALMQVGLAHLGSKIFYLDVYNPVYEVIRDPRKFGFEEVFSGCCGSGYLEASFLCNPKSYVCPNTSAYVFFDSIHPSEKTYFSLFRSLRPIYDSILGSF.

Positions M1–S28 are cleaved as a signal peptide. S54 (nucleophile) is an active-site residue. N340 carries N-linked (GlcNAc...) asparagine glycosylation. Catalysis depends on residues D348 and H351.

It belongs to the 'GDSL' lipolytic enzyme family.

The protein resides in the secreted. The sequence is that of GDSL esterase/lipase At5g45960 from Arabidopsis thaliana (Mouse-ear cress).